Here is a 301-residue protein sequence, read N- to C-terminus: Protein FdhE homolog (301 aa).

The protein belongs to the FdhE family.

It is found in the cytoplasm. Functionally, necessary for formate dehydrogenase activity. In Shewanella baltica (strain OS185), this protein is Protein FdhE homolog.